A 256-amino-acid chain; its full sequence is Pimeloyl-[acyl-carrier protein] methyl ester esterase (256 aa).

Residues 15–242 (HLVLLHGWGL…AAHAPFISHP (228 aa)) enclose the AB hydrolase-1 domain. Substrate-binding positions include W22, 82–83 (SL), and 143–147 (FLALQ). S82 functions as the Nucleophile in the catalytic mechanism. Active-site residues include D207 and H235. H235 is a substrate binding site.

Belongs to the AB hydrolase superfamily. Carboxylesterase BioH family. As to quaternary structure, monomer.

It localises to the cytoplasm. The enzyme catalyses 6-carboxyhexanoyl-[ACP] methyl ester + H2O = 6-carboxyhexanoyl-[ACP] + methanol + H(+). Its pathway is cofactor biosynthesis; biotin biosynthesis. In terms of biological role, the physiological role of BioH is to remove the methyl group introduced by BioC when the pimeloyl moiety is complete. It allows to synthesize pimeloyl-ACP via the fatty acid synthetic pathway through the hydrolysis of the ester bonds of pimeloyl-ACP esters. The chain is Pimeloyl-[acyl-carrier protein] methyl ester esterase from Escherichia coli O45:K1 (strain S88 / ExPEC).